A 507-amino-acid polypeptide reads, in one-letter code: ATP synthase subunit alpha, chloroplastic (507 aa).

Residue 170–177 (GDRQTGKT) coordinates ATP.

This sequence belongs to the ATPase alpha/beta chains family. As to quaternary structure, F-type ATPases have 2 components, CF(1) - the catalytic core - and CF(0) - the membrane proton channel. CF(1) has five subunits: alpha(3), beta(3), gamma(1), delta(1), epsilon(1). CF(0) has four main subunits: a, b, b' and c.

The protein localises to the plastid. Its subcellular location is the chloroplast thylakoid membrane. The catalysed reaction is ATP + H2O + 4 H(+)(in) = ADP + phosphate + 5 H(+)(out). In terms of biological role, produces ATP from ADP in the presence of a proton gradient across the membrane. The alpha chain is a regulatory subunit. The sequence is that of ATP synthase subunit alpha, chloroplastic from Pelargonium hortorum (Common geranium).